Here is a 112-residue protein sequence, read N- to C-terminus: Large ribosomal subunit protein uL22 (112 aa).

It belongs to the universal ribosomal protein uL22 family. As to quaternary structure, part of the 50S ribosomal subunit.

Its function is as follows. This protein binds specifically to 23S rRNA; its binding is stimulated by other ribosomal proteins, e.g. L4, L17, and L20. It is important during the early stages of 50S assembly. It makes multiple contacts with different domains of the 23S rRNA in the assembled 50S subunit and ribosome. The globular domain of the protein is located near the polypeptide exit tunnel on the outside of the subunit, while an extended beta-hairpin is found that lines the wall of the exit tunnel in the center of the 70S ribosome. In Desulfovibrio desulfuricans (strain ATCC 27774 / DSM 6949 / MB), this protein is Large ribosomal subunit protein uL22.